The primary structure comprises 209 residues: MARYCGPKNRIARRFGANIFGRSRNPLLKKPHPPGQHGMQRKKKSDYGLQLEEKQKLKACYGMILEKQLVKAFKEVINKQGSVTKMFLERFECRLDNMVYRMGFAKTIFAAQQLVSHGHVLVNGKKVDRRSFFLRPGMQVSLKEKSRKLQSVQESLENRDEGSLPSYISVDKGNFKGELLVSPEQDQIEAQLPLPVDVSVVCEFLSHRT.

The disordered stretch occupies residues 23–46 (SRNPLLKKPHPPGQHGMQRKKKSD). One can recognise an S4 RNA-binding domain in the interval 93-156 (CRLDNMVYRM…RKLQSVQESL (64 aa)).

This sequence belongs to the universal ribosomal protein uS4 family. In terms of assembly, part of the 30S ribosomal subunit. Contacts protein S5. The interaction surface between S4 and S5 is involved in control of translational fidelity.

Functionally, one of the primary rRNA binding proteins, it binds directly to 16S rRNA where it nucleates assembly of the body of the 30S subunit. In terms of biological role, with S5 and S12 plays an important role in translational accuracy. This chain is Small ribosomal subunit protein uS4, found in Chlamydia caviae (strain ATCC VR-813 / DSM 19441 / 03DC25 / GPIC) (Chlamydophila caviae).